We begin with the raw amino-acid sequence, 472 residues long: Alanine--anticapsin ligase (472 aa).

Glu-109 is a binding site for Mg(2+). ATP-binding residues include Lys-138 and Lys-178. The 214-residue stretch at 142 to 355 (RAAFNRAGVK…MAQLLLDVLC (214 aa)) folds into the ATP-grasp domain. Leu-182 is a binding site for Mg(2+). Residues 184 to 185 (SS), 226 to 229 (EEFL), and Gln-268 each bind ATP. Substrate-binding positions include Glu-273 and 309–311 (HTE). Residues Glu-311 and Glu-324 each contribute to the Mg(2+) site. 328 to 331 (RFAG) serves as a coordination point for substrate.

Monomer or homodimer. It depends on Mg(2+) as a cofactor.

The catalysed reaction is L-anticapsin + L-alanine + ATP = bacilysin + ADP + phosphate + H(+). It participates in antibiotic biosynthesis; bacilysin biosynthesis. Part of the bacABCDEFG operon responsible for the biosynthesis of bacilysin, an irreversible inactivator of the glutaminase domain of glucosamine synthetase. Catalyzes the formation of alpha-dipeptides from various L-amino acids in the presence of ATP. In vivo catalyzes the ligation of L-alanine and L-anticapsin (epoxycyclohexanonyl-Ala) to produce the final bacilysin antibiotic (L-Ala-L-4S-cyclohexenonyl-Ala dipeptide). The chain is Alanine--anticapsin ligase from Bacillus subtilis.